A 916-amino-acid chain; its full sequence is Translation initiation factor IF-2 (916 aa).

A disordered region spans residues 58–317 (LEAEGHLPGA…GVTVPRGDGG (260 aa)). Positions 120-142 (EKVAASEAADAKPAAGAPADTAK) are enriched in low complexity. Residues 195 to 206 (SNIPRPAPPRPG) are compositionally biased toward pro residues. 2 stretches are compositionally biased toward gly residues: residues 214 to 227 (RPGGGQRQGGGGRP) and 235 to 282 (SAGG…GRGG). Positions 283 to 294 (GKSKARKSKRAK) are enriched in basic residues. The tr-type G domain maps to 409–583 (IRPPVVTVMG…LTADAGLDLR (175 aa)). The interval 418 to 425 (GHVDHGKT) is G1. Residue 418-425 (GHVDHGKT) coordinates GTP. Residues 443–447 (GITQH) are G2. The G3 stretch occupies residues 468–471 (DTPG). Residues 468 to 472 (DTPGH) and 522 to 525 (NKVD) contribute to the GTP site. Residues 522–525 (NKVD) are G4. Residues 558 to 560 (SAR) are G5.

This sequence belongs to the TRAFAC class translation factor GTPase superfamily. Classic translation factor GTPase family. IF-2 subfamily.

Its subcellular location is the cytoplasm. In terms of biological role, one of the essential components for the initiation of protein synthesis. Protects formylmethionyl-tRNA from spontaneous hydrolysis and promotes its binding to the 30S ribosomal subunits. Also involved in the hydrolysis of GTP during the formation of the 70S ribosomal complex. The polypeptide is Translation initiation factor IF-2 (Leifsonia xyli subsp. xyli (strain CTCB07)).